A 596-amino-acid chain; its full sequence is Elongation factor 4 (596 aa).

The tr-type G domain maps to 2–183 (KNIRNFSIIA…AIVDRIPAPV (182 aa)). Residues 14-19 (DHGKST) and 130-133 (NKID) contribute to the GTP site.

Belongs to the TRAFAC class translation factor GTPase superfamily. Classic translation factor GTPase family. LepA subfamily.

It localises to the cell inner membrane. It catalyses the reaction GTP + H2O = GDP + phosphate + H(+). Required for accurate and efficient protein synthesis under certain stress conditions. May act as a fidelity factor of the translation reaction, by catalyzing a one-codon backward translocation of tRNAs on improperly translocated ribosomes. Back-translocation proceeds from a post-translocation (POST) complex to a pre-translocation (PRE) complex, thus giving elongation factor G a second chance to translocate the tRNAs correctly. Binds to ribosomes in a GTP-dependent manner. This chain is Elongation factor 4, found in Sulfurimonas denitrificans (strain ATCC 33889 / DSM 1251) (Thiomicrospira denitrificans (strain ATCC 33889 / DSM 1251)).